The chain runs to 167 residues: Lipoprotein signal peptidase (167 aa).

A run of 2 helical transmembrane segments spans residues 67–87 (WILV…LWRA) and 91–111 (LVAL…IDRI). Residues aspartate 118 and aspartate 136 contribute to the active site. A helical transmembrane segment spans residues 127 to 147 (FSWYVFNLADAAIVAGVALLI).

Belongs to the peptidase A8 family.

Its subcellular location is the cell inner membrane. The enzyme catalyses Release of signal peptides from bacterial membrane prolipoproteins. Hydrolyzes -Xaa-Yaa-Zaa-|-(S,diacylglyceryl)Cys-, in which Xaa is hydrophobic (preferably Leu), and Yaa (Ala or Ser) and Zaa (Gly or Ala) have small, neutral side chains.. It functions in the pathway protein modification; lipoprotein biosynthesis (signal peptide cleavage). Its function is as follows. This protein specifically catalyzes the removal of signal peptides from prolipoproteins. This Beijerinckia indica subsp. indica (strain ATCC 9039 / DSM 1715 / NCIMB 8712) protein is Lipoprotein signal peptidase.